The chain runs to 401 residues: 8-amino-7-oxononanoate synthase (401 aa).

A substrate-binding site is contributed by R19. 106 to 107 provides a ligand contact to pyridoxal 5'-phosphate; the sequence is GY. H131 is a substrate binding site. S176, H204, and T233 together coordinate pyridoxal 5'-phosphate. K236 is subject to N6-(pyridoxal phosphate)lysine. T350 serves as a coordination point for substrate.

Belongs to the class-II pyridoxal-phosphate-dependent aminotransferase family. BioF subfamily. As to quaternary structure, homodimer. Requires pyridoxal 5'-phosphate as cofactor.

It catalyses the reaction 6-carboxyhexanoyl-[ACP] + L-alanine + H(+) = (8S)-8-amino-7-oxononanoate + holo-[ACP] + CO2. It functions in the pathway cofactor biosynthesis; biotin biosynthesis. Functionally, catalyzes the decarboxylative condensation of pimeloyl-[acyl-carrier protein] and L-alanine to produce 8-amino-7-oxononanoate (AON), [acyl-carrier protein], and carbon dioxide. The chain is 8-amino-7-oxononanoate synthase from Pseudomonas aeruginosa (strain LESB58).